Reading from the N-terminus, the 1563-residue chain is Rab-3-interacting molecule unc-10 (1563 aa).

Positions Met7–Glu133 constitute a RabBD domain. Residues Phe25–Glu35 are compositionally biased toward basic and acidic residues. Positions Phe25–Asp50 are disordered. Residues Thr66–Gln121 form an FYVE-type zinc finger. 8 residues coordinate Zn(2+): Cys72, Cys75, Cys88, Cys91, Cys96, Cys99, Cys113, and Cys116. Disordered stretches follow at residues Lys128–Asn466 and Gly582–His605. Over residues Asn172–Pro182 the composition is skewed to polar residues. 2 stretches are compositionally biased toward low complexity: residues Asn190–Thr284 and Gln300–Ala316. Positions Gln326–Glu345 are enriched in basic and acidic residues. Composition is skewed to polar residues over residues Arg356–Asn367 and Gln379–Glu389. Positions Phe395–Arg415 are enriched in low complexity. Positions His643–Arg733 constitute a PDZ domain. One can recognise a C2 1 domain in the interval Ile840–Cys962. Disordered stretches follow at residues Glu1054–Asp1163, Gly1177–Ala1311, and Val1346–Thr1373. A compositionally biased stretch (polar residues) spans Trp1086 to Thr1097. Positions Tyr1112–Arg1121 are enriched in basic residues. Residues Met1129–Arg1154 show a composition bias toward basic and acidic residues. Residues Pro1181–Gln1230 show a composition bias toward low complexity. The segment covering Gly1242–Pro1255 has biased composition (polar residues). Residues Thr1256 to Ser1277 show a composition bias toward low complexity. A compositionally biased stretch (polar residues) spans Phe1278–Arg1288. Over residues Asn1297–Ala1311 the composition is skewed to low complexity. Residues Val1417 to Tyr1536 enclose the C2 2 domain.

As to expression, restricted to discrete puncta in synapse-rich regions of the nervous system including the nerve ring, the ventral nerve cord and the dorsal nerve cord. Localized expression was found in the head.

The protein localises to the synapse. Its function is as follows. Regulates the efficiency of a post-docking step of the release pathway. Acts after vesicle docking likely via regulating priming. May regulate the conformational changes in syntaxin. Binding of vesicles via rab-3[GTP] to Rim may signal the presence of a docked synaptic vesicle. Rim may then signal to unc-13 to change the conformation of syntaxin from the closed to the open state. Syntaxin could then engage synaptobrevin on the docked vesicle to form SNARE complexes and to prime the vesicle for release. Not required for the development or the structural organization of synapses. May play a role in regulating entry into the dauer state. The sequence is that of Rab-3-interacting molecule unc-10 from Caenorhabditis elegans.